The chain runs to 347 residues: MSGLLCYCRPGFEPELAAELSVRAAFVGIAGYARTQRNDGYVLFVCDEAAQLAAKLQWRELIFARQKLVVIAELKGIDPKDRITPILAALDGQQRFGDLWVEHPDSDAGKPLAGLARSFGNALRPALRKAGLLTDKPQPRQPRLHVCFLDGDHALLAVADSADSAPWPLGIPRLKLLPEAPSRSALKLDEALLTLLTPEERDALVKPGMRAADLGAAPGGWTWVLTRQHVHVTSVDNGPLREHVLETGLVEHLRADGFHWKPAQPLDWMVCDMVEQPRRVAERMATWVREGWCRNTIFNLKLPMKKRWDETRLCLDLFEQQAERSLSVRAKQLYHDREEITVLAMRD.

S-adenosyl-L-methionine is bound by residues S184, 217–220 (APGG), D236, D256, and D272. The Proton acceptor role is filled by K301.

It belongs to the class I-like SAM-binding methyltransferase superfamily. RNA methyltransferase RlmE family. RlmM subfamily. Monomer.

Its subcellular location is the cytoplasm. The catalysed reaction is cytidine(2498) in 23S rRNA + S-adenosyl-L-methionine = 2'-O-methylcytidine(2498) in 23S rRNA + S-adenosyl-L-homocysteine + H(+). In terms of biological role, catalyzes the 2'-O-methylation at nucleotide C2498 in 23S rRNA. This Xanthomonas axonopodis pv. citri (strain 306) protein is Ribosomal RNA large subunit methyltransferase M.